Reading from the N-terminus, the 550-residue chain is CTP synthase (550 aa).

The segment at 1–271 (MTRYIFITGG…DAEVLDVFGM (271 aa)) is amidoligase domain. Ser-13 lines the CTP pocket. Ser-13 contacts UTP. 14–19 (SLGKGL) contributes to the ATP binding site. L-glutamine is bound at residue Tyr-54. Asp-71 is a binding site for ATP. Mg(2+) contacts are provided by Asp-71 and Glu-145. Residues 152–154 (DIE), 192–197 (KTKPTQ), and Lys-228 each bind CTP. Residues 192–197 (KTKPTQ) and Lys-228 each bind UTP. In terms of domain architecture, Glutamine amidotransferase type-1 spans 297–549 (TIAVVGKYTV…IAAAKEHGRL (253 aa)). Gly-361 is a binding site for L-glutamine. Cys-388 acts as the Nucleophile; for glutamine hydrolysis in catalysis. Residues 389-392 (FGMQ), Glu-412, and Arg-477 contribute to the L-glutamine site. Residues His-522 and Glu-524 contribute to the active site.

The protein belongs to the CTP synthase family. In terms of assembly, homotetramer.

The enzyme catalyses UTP + L-glutamine + ATP + H2O = CTP + L-glutamate + ADP + phosphate + 2 H(+). It carries out the reaction L-glutamine + H2O = L-glutamate + NH4(+). It catalyses the reaction UTP + NH4(+) + ATP = CTP + ADP + phosphate + 2 H(+). The protein operates within pyrimidine metabolism; CTP biosynthesis via de novo pathway; CTP from UDP: step 2/2. Its activity is regulated as follows. Allosterically activated by GTP, when glutamine is the substrate; GTP has no effect on the reaction when ammonia is the substrate. The allosteric effector GTP functions by stabilizing the protein conformation that binds the tetrahedral intermediate(s) formed during glutamine hydrolysis. Inhibited by the product CTP, via allosteric rather than competitive inhibition. Functionally, catalyzes the ATP-dependent amination of UTP to CTP with either L-glutamine or ammonia as the source of nitrogen. Regulates intracellular CTP levels through interactions with the four ribonucleotide triphosphates. The protein is CTP synthase of Caulobacter vibrioides (strain ATCC 19089 / CIP 103742 / CB 15) (Caulobacter crescentus).